The chain runs to 185 residues: Elongation factor P (185 aa).

It belongs to the elongation factor P family.

The protein localises to the cytoplasm. Its pathway is protein biosynthesis; polypeptide chain elongation. Its function is as follows. Involved in peptide bond synthesis. Stimulates efficient translation and peptide-bond synthesis on native or reconstituted 70S ribosomes in vitro. Probably functions indirectly by altering the affinity of the ribosome for aminoacyl-tRNA, thus increasing their reactivity as acceptors for peptidyl transferase. This chain is Elongation factor P, found in Brevibacillus brevis (strain 47 / JCM 6285 / NBRC 100599).